Reading from the N-terminus, the 465-residue chain is Cysteine--tRNA ligase (465 aa).

Cysteine 30 lines the Zn(2+) pocket. The short motif at 32–42 (PTVYDRAHLGN) is the 'HIGH' region element. Zn(2+) is bound by residues cysteine 213, histidine 238, and glutamate 242. A 'KMSKS' region motif is present at residues 271–275 (KMSKS). Lysine 274 is a binding site for ATP.

This sequence belongs to the class-I aminoacyl-tRNA synthetase family. Monomer. The cofactor is Zn(2+).

It is found in the cytoplasm. It carries out the reaction tRNA(Cys) + L-cysteine + ATP = L-cysteinyl-tRNA(Cys) + AMP + diphosphate. The chain is Cysteine--tRNA ligase from Ruegeria pomeroyi (strain ATCC 700808 / DSM 15171 / DSS-3) (Silicibacter pomeroyi).